The primary structure comprises 438 residues: 3-phosphoshikimate 1-carboxyvinyltransferase (438 aa).

3-phosphoshikimate-binding residues include lysine 21, serine 22, and arginine 26. Lysine 21 is a binding site for phosphoenolpyruvate. Phosphoenolpyruvate-binding residues include glycine 95 and arginine 123. Residues serine 167, glutamine 169, aspartate 315, and lysine 342 each coordinate 3-phosphoshikimate. Residue glutamine 169 coordinates phosphoenolpyruvate. Aspartate 315 serves as the catalytic Proton acceptor. Phosphoenolpyruvate-binding residues include arginine 346 and arginine 387.

This sequence belongs to the EPSP synthase family. In terms of assembly, monomer.

It localises to the cytoplasm. It catalyses the reaction 3-phosphoshikimate + phosphoenolpyruvate = 5-O-(1-carboxyvinyl)-3-phosphoshikimate + phosphate. It participates in metabolic intermediate biosynthesis; chorismate biosynthesis; chorismate from D-erythrose 4-phosphate and phosphoenolpyruvate: step 6/7. Functionally, catalyzes the transfer of the enolpyruvyl moiety of phosphoenolpyruvate (PEP) to the 5-hydroxyl of shikimate-3-phosphate (S3P) to produce enolpyruvyl shikimate-3-phosphate and inorganic phosphate. The chain is 3-phosphoshikimate 1-carboxyvinyltransferase from Coxiella burnetii (strain CbuK_Q154) (Coxiella burnetii (strain Q154)).